Here is a 180-residue protein sequence, read N- to C-terminus: ATP synthase subunit b (180 aa).

Residues 15–35 (LIPEVPELVIGLLAFAIVFFV) form a helical membrane-spanning segment.

Belongs to the ATPase B chain family. In terms of assembly, F-type ATPases have 2 components, F(1) - the catalytic core - and F(0) - the membrane proton channel. F(1) has five subunits: alpha(3), beta(3), gamma(1), delta(1), epsilon(1). F(0) has three main subunits: a(1), b(2) and c(10-14). The alpha and beta chains form an alternating ring which encloses part of the gamma chain. F(1) is attached to F(0) by a central stalk formed by the gamma and epsilon chains, while a peripheral stalk is formed by the delta and b chains.

It is found in the cell membrane. Its function is as follows. F(1)F(0) ATP synthase produces ATP from ADP in the presence of a proton or sodium gradient. F-type ATPases consist of two structural domains, F(1) containing the extramembraneous catalytic core and F(0) containing the membrane proton channel, linked together by a central stalk and a peripheral stalk. During catalysis, ATP synthesis in the catalytic domain of F(1) is coupled via a rotary mechanism of the central stalk subunits to proton translocation. Component of the F(0) channel, it forms part of the peripheral stalk, linking F(1) to F(0). The protein is ATP synthase subunit b of Streptomyces avermitilis (strain ATCC 31267 / DSM 46492 / JCM 5070 / NBRC 14893 / NCIMB 12804 / NRRL 8165 / MA-4680).